The following is a 477-amino-acid chain: Tripartite motif-containing protein 72 (477 aa).

Residues Leu14, Gln17, Pro29, Cys31, Thr34, Gln37, Thr53, Pro56, Gly86, Leu89, Val97, Glu100, Leu105, Gly108, Gly114, and Lys117 each contribute to the Zn(2+) site. The RING-type zinc finger occupies 16-59 (CQLCLELFRAPVTPECGHTFCQGCLTGVPKNQDQNGSTPCPTCQ). The B box-type zinc finger occupies 83–124 (VPQGHCLEHMDPLSVYCEQDKELICGVCASLGKHKGHNIITA). A coiled-coil region spans residues 135 to 232 (LPQQQVILQE…QMEGVLKDVE (98 aa)). In terms of domain architecture, B30.2/SPRY spans 272-476 (DEFKFQVWRK…LKIFYPPAEQ (205 aa)).

The protein belongs to the TRIM/RBCC family. As to quaternary structure, homodimer. Homooligomer; disulfide-linked. Oligomerizes on the phospholipid membrane. Post-translationally, disulfide bond formation at Cys-244 occurs in case of membrane damage that cause the entry of the oxidized milieu of the extracellular space, resulting in homooligomerization.

The protein resides in the cell membrane. Its subcellular location is the sarcolemma. It localises to the cytoplasmic vesicle membrane. The enzyme catalyses S-ubiquitinyl-[E2 ubiquitin-conjugating enzyme]-L-cysteine + [acceptor protein]-L-lysine = [E2 ubiquitin-conjugating enzyme]-L-cysteine + N(6)-ubiquitinyl-[acceptor protein]-L-lysine.. It participates in protein modification; protein ubiquitination. With respect to regulation, specifically binds phosphatidylserine. The binding to phospholipids enhances ubiquitination activity. Functionally, muscle-specific E3 ubiquitin-protein ligase that plays a central role in cell membrane repair by nucleating the assembly of the repair machinery at injury sites. Acts as a sensor of oxidation: upon membrane damage, entry of extracellular oxidative environment results in disulfide bond formation and homooligomerization at the injury site. This oligomerization acts as a nucleation site for recruitment of TRIM72-containing vesicles to the injury site, leading to membrane patch formation. Probably acts upstream of the Ca(2+)-dependent membrane resealing process. Required for transport of DYSF to sites of cell injury during repair patch formation. Regulates membrane budding and exocytosis. May be involved in the regulation of the mobility of KCNB1-containing endocytic vesicles. This Xenopus laevis (African clawed frog) protein is Tripartite motif-containing protein 72 (trim72).